The sequence spans 156 residues: Small ribosomal subunit protein uS7 (156 aa).

Belongs to the universal ribosomal protein uS7 family. In terms of assembly, part of the 30S ribosomal subunit. Contacts proteins S9 and S11.

In terms of biological role, one of the primary rRNA binding proteins, it binds directly to 16S rRNA where it nucleates assembly of the head domain of the 30S subunit. Is located at the subunit interface close to the decoding center, probably blocks exit of the E-site tRNA. The polypeptide is Small ribosomal subunit protein uS7 (Brucella melitensis biotype 1 (strain ATCC 23456 / CCUG 17765 / NCTC 10094 / 16M)).